The sequence spans 81 residues: Cytotoxin 1 (81 aa).

Residues 1 to 21 (MKTLLLTLVVVTIVCLDLGYT) form the signal peptide. Intrachain disulfides connect Cys24-Cys42, Cys35-Cys59, Cys63-Cys74, and Cys75-Cys80.

The protein belongs to the three-finger toxin family. Short-chain subfamily. Type IA cytotoxin sub-subfamily. In terms of assembly, monomer in solution; Homodimer and oligomer in the presence of negatively charged lipids forming a pore with a size ranging between 20 and 30 Angstroms. As to expression, expressed by the venom gland.

Its subcellular location is the secreted. It is found in the target cell membrane. Basic protein that binds to cell membrane and depolarizes cardiomyocytes. It also shows lytic activities on many other cells, including red blood cells. Interaction with sulfatides in the cell membrane induces pore formation and cell internalization and is responsible for cytotoxicity in cardiomyocytes. It targets the mitochondrial membrane and induces mitochondrial swelling and fragmentation. It binds to the integrin alpha-V/beta-3 (ITGAV/ITGB3) with a moderate affinity and inhibits protein kinases C. It also binds with high affinity to heparin. It also causes skeletal muscle necrosis after intramuscular injection into mice. This is Cytotoxin 1 from Naja atra (Chinese cobra).